We begin with the raw amino-acid sequence, 374 residues long: Severin (374 aa).

Gelsolin-like repeat units lie at residues 58–109 (FTLE…DEYG), 180–220 (EGKT…KCSA), and 278–369 (EVIK…SFLK).

It belongs to the villin/gelsolin family.

Severin blocks the ends of F-actin and causes the fragmentation and depolymerization of actin filaments. This severin binds stably with actin both in a Ca(2+) dependent and a Ca(2+) independent manner. The chain is Severin (AG8) from Echinococcus granulosus (Hydatid tapeworm).